A 499-amino-acid chain; its full sequence is Phenylalanine--tRNA ligase alpha subunit (499 aa).

L-phenylalanine-binding positions include T342, 381-383 (QID), and F422. Position 424 (E424) interacts with Mg(2+). F447 is an L-phenylalanine binding site.

It belongs to the class-II aminoacyl-tRNA synthetase family. Phe-tRNA synthetase alpha subunit type 2 subfamily. In terms of assembly, tetramer of two alpha and two beta subunits. Mg(2+) is required as a cofactor.

The protein resides in the cytoplasm. It catalyses the reaction tRNA(Phe) + L-phenylalanine + ATP = L-phenylalanyl-tRNA(Phe) + AMP + diphosphate + H(+). This is Phenylalanine--tRNA ligase alpha subunit from Pyrococcus furiosus (strain ATCC 43587 / DSM 3638 / JCM 8422 / Vc1).